The primary structure comprises 1486 residues: Chromosome partition protein MukB (1486 aa).

An ATP-binding site is contributed by 34 to 41 (GGNGAGKS). Coiled-coil stretches lie at residues 326–418 (LEAD…QYNQ), 444–480 (LETF…QAYQ), and 509–603 (RHLA…RAPV). The flexible hinge stretch occupies residues 666-783 (PGGSEDQRLN…EVPLFGRAAR (118 aa)). 3 coiled-coil regions span residues 835-923 (EAEI…AKLE), 977-1115 (EMLS…TAKA), and 1209-1266 (VEAI…QNVS).

Belongs to the SMC family. MukB subfamily. Homodimerization via its hinge domain. Binds to DNA via its C-terminal region. Interacts, and probably forms a ternary complex, with MukE and MukF via its C-terminal region. The complex formation is stimulated by calcium or magnesium. Interacts with tubulin-related protein FtsZ.

The protein localises to the cytoplasm. It is found in the nucleoid. In terms of biological role, plays a central role in chromosome condensation, segregation and cell cycle progression. Functions as a homodimer, which is essential for chromosome partition. Involved in negative DNA supercoiling in vivo, and by this means organize and compact chromosomes. May achieve or facilitate chromosome segregation by condensation DNA from both sides of a centrally located replisome during cell division. This Escherichia coli (strain 55989 / EAEC) protein is Chromosome partition protein MukB.